We begin with the raw amino-acid sequence, 556 residues long: Formate--tetrahydrofolate ligase (556 aa).

An ATP-binding site is contributed by 65–72; it reads TPAGEGKS.

It belongs to the formate--tetrahydrofolate ligase family.

The catalysed reaction is (6S)-5,6,7,8-tetrahydrofolate + formate + ATP = (6R)-10-formyltetrahydrofolate + ADP + phosphate. It functions in the pathway one-carbon metabolism; tetrahydrofolate interconversion. This chain is Formate--tetrahydrofolate ligase, found in Clostridium acetobutylicum (strain ATCC 824 / DSM 792 / JCM 1419 / IAM 19013 / LMG 5710 / NBRC 13948 / NRRL B-527 / VKM B-1787 / 2291 / W).